Consider the following 608-residue polypeptide: 2',5'-phosphodiesterase 12 (608 aa).

Residues 1–16 (MWRLPGRAALRGVRSV) constitute a mitochondrion transit peptide. The disordered stretch occupies residues 91–111 (AKKSRKNRAHSSGGAACAATG). Positions 100–111 (HSSGGAACAATG) are enriched in low complexity. Ser216 carries the phosphoserine modification. Glu350, Asp495, and Asn497 together coordinate Mg(2+). Asp495 functions as the Proton donor/acceptor in the catalytic mechanism.

It belongs to the CCR4/nocturin family. Mg(2+) is required as a cofactor.

Its subcellular location is the mitochondrion matrix. It carries out the reaction Exonucleolytic cleavage of poly(A) to 5'-AMP.. Functionally, enzyme that cleaves 2',5'-phosphodiester bond linking adenosines of the 5'-triphosphorylated oligoadenylates, triphosphorylated oligoadenylates referred as 2-5A modulates the 2-5A system. Degrades triphosphorylated 2-5A to produce AMP and ATP. Also cleaves 3',5'-phosphodiester bond of oligoadenylates. Plays a role as a negative regulator of the 2-5A system that is one of the major pathways for antiviral and antitumor functions induced by interferons (IFNs). Suppression of this enzyme increases cellular 2-5A levels and decreases viral replication in cultured small-airway epithelial cells. The polypeptide is 2',5'-phosphodiesterase 12 (Pde12) (Rattus norvegicus (Rat)).